The sequence spans 493 residues: Chaperone SurA (493 aa).

A signal peptide spans 1 to 33; the sequence is MKRQAFSLLSRLNPWQQLLLSAVLVTLAAPAAA. Residues 46–76 are disordered; the sequence is FTQQGSQSASQGSTVAPSQPMMGVPQPSSQP. Positions 48-58 are enriched in low complexity; it reads QQGSQSASQGS. PpiC domains are found at residues 230–332 and 346–444; these read PTEF…KLVS and IAQT…QVEN.

The protein localises to the periplasm. It catalyses the reaction [protein]-peptidylproline (omega=180) = [protein]-peptidylproline (omega=0). Its function is as follows. Chaperone involved in the correct folding and assembly of outer membrane proteins. Recognizes specific patterns of aromatic residues and the orientation of their side chains, which are found more frequently in integral outer membrane proteins. May act in both early periplasmic and late outer membrane-associated steps of protein maturation. This chain is Chaperone SurA, found in Cupriavidus metallidurans (strain ATCC 43123 / DSM 2839 / NBRC 102507 / CH34) (Ralstonia metallidurans).